Consider the following 322-residue polypeptide: MRVVFFGTPEFALPSLQILLQPQSPFEVVGLVCQPDRPQGRGQKVLPPPTKVLAQAHGIPVWQPVRLRRDPQVLAALEALAADVFVVVAYGQILPLTVLQMPKLGCVNVHGSLLPAYRGAAPIQWAIANGETETGVTTMLMDEGMDTGAILLQAKLPIGPEQTSLELAPQLAQLGAELLVETLLKLEKGELTPIPQDGSRATYAPLLKKQDFHLDWQRPAQALHNQIRAFSPNCFTGIEGQRIKIVRSASPQLHSPPPEIPQGSPGEVVGLARGEGIYVATGEGSLLIRRAQLPGKKEQSAWDLVNGGQLKVGMRFEPLPNS.

112–115 provides a ligand contact to (6S)-5,6,7,8-tetrahydrofolate; that stretch reads SLLP.

It belongs to the Fmt family.

The enzyme catalyses L-methionyl-tRNA(fMet) + (6R)-10-formyltetrahydrofolate = N-formyl-L-methionyl-tRNA(fMet) + (6S)-5,6,7,8-tetrahydrofolate + H(+). In terms of biological role, attaches a formyl group to the free amino group of methionyl-tRNA(fMet). The formyl group appears to play a dual role in the initiator identity of N-formylmethionyl-tRNA by promoting its recognition by IF2 and preventing the misappropriation of this tRNA by the elongation apparatus. The sequence is that of Methionyl-tRNA formyltransferase from Synechococcus sp. (strain JA-2-3B'a(2-13)) (Cyanobacteria bacterium Yellowstone B-Prime).